Reading from the N-terminus, the 302-residue chain is 33 kDa chaperonin (302 aa).

2 cysteine pairs are disulfide-bonded: Cys234–Cys236 and Cys267–Cys270.

Belongs to the HSP33 family. Post-translationally, under oxidizing conditions two disulfide bonds are formed involving the reactive cysteines. Under reducing conditions zinc is bound to the reactive cysteines and the protein is inactive.

It localises to the cytoplasm. Redox regulated molecular chaperone. Protects both thermally unfolding and oxidatively damaged proteins from irreversible aggregation. Plays an important role in the bacterial defense system toward oxidative stress. This Neisseria gonorrhoeae (strain ATCC 700825 / FA 1090) protein is 33 kDa chaperonin.